The primary structure comprises 495 residues: Ectonucleoside triphosphate diphosphohydrolase 2 (495 aa).

The Cytoplasmic segment spans residues 1–7 (MAGKVRS). A helical membrane pass occupies residues 8–28 (LLPPLLLAAAGLAGLLLLCVP). The Extracellular segment spans residues 29–462 (TRDVREPPAL…PGLRKGTDFS (434 aa)). Residue Asn-64 is glycosylated (N-linked (GlcNAc...) asparagine). An intrachain disulfide couples Cys-75 to Cys-99. An N-linked (GlcNAc...) asparagine glycan is attached at Asn-129. The active-site Proton acceptor is the Glu-165. 204–208 (GASTQ) lines the ATP pocket. 4 cysteine pairs are disulfide-bonded: Cys-242-Cys-284, Cys-265-Cys-310, Cys-323-Cys-328, and Cys-377-Cys-399. Asn-294 carries N-linked (GlcNAc...) asparagine glycosylation. Residues Asn-378 and Asn-443 are each glycosylated (N-linked (GlcNAc...) asparagine). The helical transmembrane segment at 463-483 (SWVVLLLLFASALLAALVLLL) threads the bilayer. Over 484-495 (RQVHSAKLPSTI) the chain is Cytoplasmic.

The protein belongs to the GDA1/CD39 NTPase family. It depends on Ca(2+) as a cofactor. Requires Mg(2+) as cofactor. In terms of tissue distribution, brain, placenta, skeletal muscle, kidney, pancreas, heart, ovary, testis, colon, small intestine, prostate and pancreas. No expression in adult thymus, spleen, lung, liver and peripheral blood leukocytes.

It localises to the cell membrane. The protein resides in the endoplasmic reticulum membrane. Its function is as follows. In the nervous system, could hydrolyze ATP and other nucleotides to regulate purinergic neurotransmission. Hydrolyzes ADP only to a marginal extent. The order of activity with different substrates is ATP &gt; GTP &gt; CTP = ITP &gt; UTP &gt;&gt; ADP = UDP. This Homo sapiens (Human) protein is Ectonucleoside triphosphate diphosphohydrolase 2 (ENTPD2).